We begin with the raw amino-acid sequence, 153 residues long: Small ribosomal subunit protein bS16 (153 aa).

The interval 130-153 is disordered; the sequence is EAEAAAAAEEAPAEEAAEEAPAEA. Positions 140–153 are enriched in acidic residues; that stretch reads APAEEAAEEAPAEA.

The protein belongs to the bacterial ribosomal protein bS16 family.

The protein is Small ribosomal subunit protein bS16 of Bifidobacterium longum (strain NCC 2705).